Here is a 960-residue protein sequence, read N- to C-terminus: Probable glutamyl endopeptidase, chloroplastic (960 aa).

Residues 1–62 (MMRFHKACHR…FSENPLTTVM (62 aa)) constitute a chloroplast transit peptide. The segment at 78-98 (SGGAEDGGGTSNGSLSASATA) is disordered. Positions 89 to 98 (NGSLSASATA) are enriched in polar residues. Catalysis depends on charge relay system residues serine 780, aspartate 854, and histidine 888. The disordered stretch occupies residues 915–960 (TSDADTSPDQSKEGSDSADKVSTGTGGGNPEFGEHEVHSKLRRSLL). Positions 924-933 (QSKEGSDSAD) are enriched in basic and acidic residues.

This sequence belongs to the peptidase S9D family.

Its subcellular location is the plastid. The protein localises to the chloroplast stroma. Serine-type protease active in vitro against the LHCII N-terminal. Cleaves its substrate on the carboxy-side of Glu residues. The polypeptide is Probable glutamyl endopeptidase, chloroplastic (GEP) (Arabidopsis thaliana (Mouse-ear cress)).